The primary structure comprises 209 residues: V-type ATP synthase subunit D (209 aa).

The protein belongs to the V-ATPase D subunit family.

Produces ATP from ADP in the presence of a proton gradient across the membrane. This chain is V-type ATP synthase subunit D, found in Anaeromyxobacter dehalogenans (strain 2CP-C).